We begin with the raw amino-acid sequence, 20 residues long: Disintegrin (20 aa).

One can recognise a Disintegrin domain in the interval 1 to 20 (EAGEECDCGTPENPCCDAAT). 2 cysteine pairs are disulfide-bonded: C6–C15 and C8–C16.

The protein belongs to the venom metalloproteinase (M12B) family. P-II subfamily. P-IIa sub-subfamily. Monomer. Expressed by the venom gland.

It is found in the secreted. In terms of biological role, inhibits fibrinogen interaction with platelets. Acts by binding to alpha-IIb/beta-3 (ITGA2B/ITGB3) on the platelet surface and inhibits aggregation induced by ADP, thrombin, platelet-activating factor and collagen. In Bothrops fonsecai (Fonseca's lancehead), this protein is Disintegrin.